An 877-amino-acid chain; its full sequence is Dolichyl-phosphate-mannose--protein mannosyltransferase 1 (877 aa).

N-linked (GlcNAc...) asparagine glycosylation occurs at Asn-83. Helical transmembrane passes span 109–129 (FFMD…GAIG) and 150–170 (YIFM…LCYL). The N-linked (GlcNAc...) asparagine glycan is linked to Asn-195. Transmembrane regions (helical) follow at residues 196-216 (VTIS…AAAI), 226-246 (IPFT…LGLA), 252-272 (VGLF…WFLI), and 291-311 (IILL…HFQL). The region spanning 340–394 (TEQVGLGSVVTIRHVDTQGGYLHSHEHFYQTGSKQQQITLYPHLDSNNKWLIEPY) is the MIR 1 domain. N-linked (GlcNAc...) asparagine glycans are attached at residues Asn-395 and Asn-400. 2 MIR domains span residues 403-462 (FVPL…VEIV) and 472-528 (QTFV…IETN). Transmembrane regions (helical) follow at residues 604–624 (TWWA…VTVF), 643–663 (VQTF…FIMG), 666–686 (LFLH…GHFF), and 700–720 (FQQV…VFYV). N-linked (GlcNAc...) asparagine glycosylation occurs at Asn-721. Residues 778–877 (VVEAKQTPKA…EDESVHQVQQ (100 aa)) form a disordered region. Composition is skewed to basic and acidic residues over residues 783–799 (QTPK…DHIE), 807–816 (VEEKEVKEEV), and 847–857 (NDEKSVEEKQQ).

It belongs to the glycosyltransferase 39 family. PMT1 and PMT2 form a functional heterodimer.

Its subcellular location is the endoplasmic reticulum membrane. The enzyme catalyses a di-trans,poly-cis-dolichyl beta-D-mannosyl phosphate + L-seryl-[protein] = 3-O-(alpha-D-mannosyl)-L-seryl-[protein] + a di-trans,poly-cis-dolichyl phosphate + H(+). It catalyses the reaction a di-trans,poly-cis-dolichyl beta-D-mannosyl phosphate + L-threonyl-[protein] = 3-O-(alpha-D-mannosyl)-L-threonyl-[protein] + a di-trans,poly-cis-dolichyl phosphate + H(+). It participates in protein modification; protein glycosylation. Its function is as follows. Protein mannosyltransferase (PMT) involved in hyphal growth and drug sensitivity. Transfers mannose from Dol-P-mannose to Ser or Thr residues on proteins. PMT1, PMT2 and PMT4 account for most of the protein-O-glycosylation activity, while PMT5 and PMT6 may specifically modulate a much narrower spectrum of target proteins. Accounts for the O-glycosylation of the cell wall proteins KRE9, PIR2, RHD3, and ALS1, as well as the SEC20 t-SNARE component. O-glycosylation of SEC20 is essential for its stability. Required for filamentation and early phases of biofilm formation. In Candida albicans (strain SC5314 / ATCC MYA-2876) (Yeast), this protein is Dolichyl-phosphate-mannose--protein mannosyltransferase 1 (PMT1).